The primary structure comprises 274 residues: Ribosomal RNA small subunit methyltransferase A (274 aa).

Positions 15, 17, 42, 64, 89, and 108 each coordinate S-adenosyl-L-methionine.

Belongs to the class I-like SAM-binding methyltransferase superfamily. rRNA adenine N(6)-methyltransferase family. RsmA subfamily.

It localises to the cytoplasm. It carries out the reaction adenosine(1518)/adenosine(1519) in 16S rRNA + 4 S-adenosyl-L-methionine = N(6)-dimethyladenosine(1518)/N(6)-dimethyladenosine(1519) in 16S rRNA + 4 S-adenosyl-L-homocysteine + 4 H(+). Functionally, specifically dimethylates two adjacent adenosines (A1518 and A1519) in the loop of a conserved hairpin near the 3'-end of 16S rRNA in the 30S particle. May play a critical role in biogenesis of 30S subunits. In Prochlorococcus marinus (strain AS9601), this protein is Ribosomal RNA small subunit methyltransferase A.